A 91-amino-acid polypeptide reads, in one-letter code: Non-specific lipid-transfer protein 1 (91 aa).

4 disulfides stabilise this stretch: Cys4–Cys51, Cys14–Cys28, Cys29–Cys74, and Cys49–Cys88.

As to expression, detected in seeds (at protein level).

Plant non-specific lipid-transfer proteins transfer phospholipids as well as galactolipids across membranes. May play a role in wax or cutin deposition in the cell walls of expanding epidermal cells and certain secretory tissues. In Trachyspermum ammi (Ajowan caraway), this protein is Non-specific lipid-transfer protein 1.